A 53-amino-acid polypeptide reads, in one-letter code: MAVPKKRTSRSKTNSRFANWLNKSNLQAQRAISKAKSITNKKNTVNDETIETE.

This sequence belongs to the bacterial ribosomal protein bL32 family.

The protein localises to the plastid. The protein resides in the chloroplast. The protein is Large ribosomal subunit protein bL32c (rpl32) of Guillardia theta (Cryptophyte).